The sequence spans 59 residues: Large ribosomal subunit protein bL33 (59 aa).

This sequence belongs to the bacterial ribosomal protein bL33 family.

The chain is Large ribosomal subunit protein bL33 from Borrelia turicatae (strain 91E135).